The primary structure comprises 1332 residues: Sister chromatid cohesion protein PDS5 homolog A (1332 aa).

Position 1 is an N-acetylmethionine (Met-1). The stretch at 392 to 428 (ALVNDQLLGFVRERTLDKRWRVRKEAMMGLAQLYKKY) is one HEAT repeat. Phosphoserine is present on Ser-1096. The interval 1138-1332 (GVLGTVNKPL…PAERQIDLQR (195 aa)) is disordered. At Lys-1145 the chain carries N6-acetyllysine. The span at 1160-1173 (GTETGSNINANSEL) shows a compositional bias: polar residues. Residues Ser-1174 and Ser-1194 each carry the phosphoserine modification. Thr-1207 carries the phosphothreonine modification. Residue Lys-1210 is modified to N6-acetyllysine. The segment covering 1222–1232 (SDQSTQGNISS) has biased composition (polar residues). Lys-1288 bears the N6-acetyllysine mark. Residue Ser-1303 is modified to Phosphoserine. A compositionally biased stretch (basic and acidic residues) spans 1316 to 1332 (DGAKKAVPAERQIDLQR).

The protein belongs to the PDS5 family. In terms of assembly, interacts with the cohesin complex. Interacts with WAPL (via FGF motifs) or CDCA5 (via the FGF motif); the interaction is direct, cohesin-dependent and competitive. Interacts with SMC3. Interacts with TP63.

Its subcellular location is the nucleus. Probable regulator of sister chromatid cohesion in mitosis which may stabilize cohesin complex association with chromatin. May couple sister chromatid cohesion during mitosis to DNA replication. Cohesion ensures that chromosome partitioning is accurate in both meiotic and mitotic cells and plays an important role in DNA repair. The polypeptide is Sister chromatid cohesion protein PDS5 homolog A (Pds5a) (Mus musculus (Mouse)).